A 327-amino-acid polypeptide reads, in one-letter code: Zinc transport protein ZntB (327 aa).

Residues 1 to 271 lie on the Cytoplasmic side of the membrane; the sequence is METIYGSSLK…AMNRRTYTMS (271 aa). Residues 272–292 traverse the membrane as a helical segment; the sequence is LLAMIFLPTTFLTGLFGVNLG. At 293 to 300 the chain is on the periplasmic side; sequence GIPGNEYY. Residues 301-321 traverse the membrane as a helical segment; that stretch reads LGFAIFCLLLFGLVLFVAWWL. The Cytoplasmic portion of the chain corresponds to 322–327; the sequence is KKSKWL.

It belongs to the CorA metal ion transporter (MIT) (TC 1.A.35) family.

It localises to the cell inner membrane. It catalyses the reaction Zn(2+)(out) + H(+)(out) = Zn(2+)(in) + H(+)(in). In terms of biological role, zinc transporter. Acts as a Zn(2+):proton symporter, which likely mediates zinc ion uptake. This chain is Zinc transport protein ZntB, found in Photorhabdus laumondii subsp. laumondii (strain DSM 15139 / CIP 105565 / TT01) (Photorhabdus luminescens subsp. laumondii).